A 698-amino-acid chain; its full sequence is Elongation factor G (698 aa).

Residues 8–290 enclose the tr-type G domain; sequence ERYRNIGIAA…AVIEFLPAPN (283 aa). Residues 17–24, 88–92, and 142–145 each bind GTP; these read AHIDAGKT, DTPGH, and NKMD.

The protein belongs to the TRAFAC class translation factor GTPase superfamily. Classic translation factor GTPase family. EF-G/EF-2 subfamily.

It is found in the cytoplasm. Functionally, catalyzes the GTP-dependent ribosomal translocation step during translation elongation. During this step, the ribosome changes from the pre-translocational (PRE) to the post-translocational (POST) state as the newly formed A-site-bound peptidyl-tRNA and P-site-bound deacylated tRNA move to the P and E sites, respectively. Catalyzes the coordinated movement of the two tRNA molecules, the mRNA and conformational changes in the ribosome. The sequence is that of Elongation factor G from Halorhodospira halophila (strain DSM 244 / SL1) (Ectothiorhodospira halophila (strain DSM 244 / SL1)).